The following is a 39-amino-acid chain: Contryphan-Cal2 (39 aa).

An N-terminal signal peptide occupies residues 1–20; that stretch reads MTRTAVLLLTLLFLVAMAAS. A disulfide bridge links Cys-29 with Cys-35.

As to expression, expressed by the venom duct.

It is found in the secreted. Its function is as follows. Probable neurotoxin. The protein is Contryphan-Cal2 of Californiconus californicus (California cone).